The following is a 936-amino-acid chain: F-box protein dre-1 (936 aa).

Residues 1–67 are disordered; sequence MSSSSSPFFH…GSSEADNPTL (67 aa). Positions 22–36 are enriched in low complexity; that stretch reads QQSPSYSQNSNSPSQ. Over residues 48 to 63 the composition is skewed to polar residues; the sequence is GSTSMRYSPSGSSEAD. Residues 159–205 form the F-box domain; it reads QDHINRLPEELLLKVFSFLPDKSLLACSSVSYRFNQISNSHEVWKEL. PbH1 repeat units follow at residues 405-427, 428-450, 451-473, 474-496, 497-519, 520-542, 543-565, 566-588, 589-611, 612-634, 635-657, 658-680, 681-703, 704-726, 727-749, 750-772, 773-795, and 796-818; these read SAAPKFKYCTVLDCENVGIYITD, NATGHYEHCEIARNTLAGVWVKN, HANPYFRKCTIHSGKDVGVFTFE, HGQGYFEKCNIHSNRISGIEVKN, SANPVVIRCEVHHGYTGGIYVHE, RGRGQFMENRIYANAYAGIWITS, HSDPTIRKNEIFTGQQGGVYIFG, EGRGLIEQNNIYGNALAGIQIRS, QSDPIVRLNKIHDGLHGGIYVHE, KGRGLIEENEVYGNTLAGIWVTT, GSSPILRKNRIHSGKQVGVYFYD, QGHGLLEENDIFNHLYSGVQIRT, GSNPKITRNKIWGGQNGGVLVYN, GGKGCLEDNEIFDNAMAGVWIKT, DSEPTLRRNKIYDGRDGGVCIFN, RGKGLLEDNEIFRNAQAGVLIST, ESNPTLRRNRVFDGKSAGIEITN, and GATATLEENQLFRNKYGGLCVAT. The segment at 843 to 914 adopts a UBR-type zinc-finger fold; the sequence is GLCLFKVSSN…LERHCHLQNV (72 aa).

In terms of assembly, component of a SCF ubiquitin ligase complex. Interacts (via F-box) with skr-1. Interacts with blmp-1; the interaction targets blmp-1 for proteasomal degradation. Interacts with ced-9; the interaction inhibits ced-9 activity, either directly or indirectly. In terms of tissue distribution, in mid-embryogenesis, expression is most prominent in epidermal and intestinal cells. By the 1.5-fold stage of embryogenesis, expression is additionally detected in neurons and other cells. During larval and adult stages, highest expression is seen in epidermal seam cells and hypodermis. In larvae, strongly expressed in the P epidermal blast cells and descendents that give rise to the vulva and weakly expressed in the somatic gonad, including the gonadoblasts, the anchor cell and the distal tip cells. Some weak expression also seen in adult spermatheca and uterus. In the musculature, expressed in the pharynx, anal depressor, sex muscles, and body wall muscles. Detected in neurons of the head, tail, ventral cord and periphery. Also expressed in the embryonic tail spike cell.

The protein resides in the nucleus. It is found in the cytoplasm. It participates in protein modification; protein ubiquitination. Its function is as follows. Substrate recognition component of a SCF (SKP1-CUL1-F-box protein) E3 ubiquitin-protein ligase complex which mediates the ubiquitination and subsequent proteasomal degradation of target proteins including blmp-1. Promotes ubiquitination of snail family proteins ces-1, scrt-1 and snai-1. Heterochronic protein which is required for the timing of gonad development and epidermal seam cell differentiation. Regulates tail-spike cell death through inhibition of the apoptosis regulator ced-9. This is F-box protein dre-1 from Caenorhabditis elegans.